Consider the following 469-residue polypeptide: Flap endonuclease 1-B (469 aa).

Residues 1–103 form an N-domain region; it reads MGIKGLTGLL…GVLSKRLERR (103 aa). Aspartate 32 contributes to the Mg(2+) binding site. Arginine 45 and arginine 69 together coordinate DNA. The Mg(2+) site is built by aspartate 85, glutamate 157, glutamate 159, aspartate 183, and aspartate 185. The I-domain stretch occupies residues 121–257; it reads DVDRFSRRTV…KSALKLIREY (137 aa). A DNA-binding site is contributed by glutamate 157. The DNA site is built by glycine 235 and aspartate 237. Residue aspartate 237 coordinates Mg(2+). A disordered region spans residues 274 to 354; the sequence is QKAAQAAVES…GGMQIPEEWP (81 aa). 2 stretches are compositionally biased toward acidic residues: residues 282–295 and 302–317; these read ESDEESEHEEEDEP and EMPDPVEEDQDGEEEA. The span at 326–342 shows a compositional bias: basic residues; that stretch reads PKKKKASSKTKEKRKGK. Positions 412–420 are interaction with PCNA; sequence QQGRLDGFF. The tract at residues 424 to 469 is disordered; sequence PKEKAAAPAPVGKAKGKGKIDAKAKGTKRKVDEKAESSAGKKPRKK. Basic and acidic residues predominate over residues 441-459; the sequence is GKIDAKAKGTKRKVDEKAE.

The protein belongs to the XPG/RAD2 endonuclease family. FEN1 subfamily. As to quaternary structure, interacts with PCNA. Three molecules of FEN1 bind to one PCNA trimer with each molecule binding to one PCNA monomer. PCNA stimulates the nuclease activity without altering cleavage specificity. It depends on Mg(2+) as a cofactor. In terms of processing, phosphorylated. Phosphorylation upon DNA damage induces relocalization to the nuclear plasma.

Its subcellular location is the nucleus. The protein localises to the nucleolus. It localises to the nucleoplasm. It is found in the mitochondrion. Functionally, structure-specific nuclease with 5'-flap endonuclease and 5'-3' exonuclease activities involved in DNA replication and repair. During DNA replication, cleaves the 5'-overhanging flap structure that is generated by displacement synthesis when DNA polymerase encounters the 5'-end of a downstream Okazaki fragment. It enters the flap from the 5'-end and then tracks to cleave the flap base, leaving a nick for ligation. Also involved in the long patch base excision repair (LP-BER) pathway, by cleaving within the apurinic/apyrimidinic (AP) site-terminated flap. Acts as a genome stabilization factor that prevents flaps from equilibrating into structures that lead to duplications and deletions. Also possesses 5'-3' exonuclease activity on nicked or gapped double-stranded DNA, and exhibits RNase H activity. Also involved in replication and repair of rDNA and in repairing mitochondrial DNA. This is Flap endonuclease 1-B from Laccaria bicolor (strain S238N-H82 / ATCC MYA-4686) (Bicoloured deceiver).